The following is a 513-amino-acid chain: Pleiotropic regulator 1 (513 aa).

Met-1 bears the N-acetylmethionine mark. Residues Ser-119 and Ser-200 each carry the phosphoserine modification. WD repeat units follow at residues 201–240, 243–282, 285–324, 327–366, 369–409, 410–448, and 459–498; these read GHLG…LKLS, GHIS…VIRH, GHLS…SVHT, GHTN…TRVT, NHKK…QNLS, GHNA…NFQR, and DSES…TEET. Ser-390 is modified (phosphoserine).

It belongs to the WD repeat PRL1/PRL2 family. In terms of assembly, identified in the spliceosome C complex. Component of the PRP19-CDC5L splicing complex composed of a core complex comprising a homotetramer of PRPF19, CDC5L, PLRG1 and BCAS2, and at least three less stably associated proteins CTNNBL1, CWC15 and HSPA8. Interacts (via its WD40 repeat domain) directly with CDC5L (via its C-terminal); the interaction is required for mRNA splicing but not for spliceosome assembly. Component of the minor spliceosome, which splices U12-type introns. Within this complex, interacts with CRIPT. Also interacts directly in the complex with BCAS2 and PRPF19. Interacts with USB1.

Its subcellular location is the nucleus. The protein localises to the nucleus speckle. In terms of biological role, involved in pre-mRNA splicing as component of the spliceosome. Component of the PRP19-CDC5L complex that forms an integral part of the spliceosome and is required for activating pre-mRNA splicing. As a component of the minor spliceosome, involved in the splicing of U12-type introns in pre-mRNAs. The polypeptide is Pleiotropic regulator 1 (PLRG1) (Bos taurus (Bovine)).